Reading from the N-terminus, the 126-residue chain is C-type natriuretic peptide (126 aa).

A signal peptide spans 1–23 (MHLSQLIACALLLALLSLRPSEA). The segment at 20–73 (PSEAKPGTPPKVPRTPPGEELADSQAAGGNQKKGDKTPGSGGANLKGDRSRLLR) is disordered. A propeptide spanning residues 24–73 (KPGTPPKVPRTPPGEELADSQAAGGNQKKGDKTPGSGGANLKGDRSRLLR) is cleaved from the precursor. Residues 26 to 35 (GTPPKVPRTP) are compositionally biased toward pro residues. Cys-110 and Cys-126 are disulfide-bonded.

It belongs to the natriuretic peptide family. Post-translationally, degraded by IDE (in vitro).

It localises to the secreted. Hormone which plays a role in endochondral ossification through regulation of cartilaginous growth plate chondrocytes proliferation and differentiation. May also be vasoactive and natriuretic. Acts by specifically binding and stimulating NPR2 to produce cGMP. Binds the clearance receptor NPR3. In Mus musculus (Mouse), this protein is C-type natriuretic peptide (Nppc).